Reading from the N-terminus, the 709-residue chain is Ribosomal RNA large subunit methyltransferase K/L (709 aa).

One can recognise a THUMP domain in the interval 43 to 154; sequence LAYRITLWTR…NGVITIAMNF (112 aa).

This sequence belongs to the methyltransferase superfamily. RlmKL family.

The protein resides in the cytoplasm. The enzyme catalyses guanosine(2445) in 23S rRNA + S-adenosyl-L-methionine = N(2)-methylguanosine(2445) in 23S rRNA + S-adenosyl-L-homocysteine + H(+). It catalyses the reaction guanosine(2069) in 23S rRNA + S-adenosyl-L-methionine = N(2)-methylguanosine(2069) in 23S rRNA + S-adenosyl-L-homocysteine + H(+). Its function is as follows. Specifically methylates the guanine in position 2445 (m2G2445) and the guanine in position 2069 (m7G2069) of 23S rRNA. This Shewanella baltica (strain OS195) protein is Ribosomal RNA large subunit methyltransferase K/L.